Here is a 400-residue protein sequence, read N- to C-terminus: Tryptophan synthase beta chain (400 aa).

K92 is subject to N6-(pyridoxal phosphate)lysine.

It belongs to the TrpB family. In terms of assembly, tetramer of two alpha and two beta chains. The cofactor is pyridoxal 5'-phosphate.

The catalysed reaction is (1S,2R)-1-C-(indol-3-yl)glycerol 3-phosphate + L-serine = D-glyceraldehyde 3-phosphate + L-tryptophan + H2O. Its pathway is amino-acid biosynthesis; L-tryptophan biosynthesis; L-tryptophan from chorismate: step 5/5. The beta subunit is responsible for the synthesis of L-tryptophan from indole and L-serine. This chain is Tryptophan synthase beta chain, found in Neisseria meningitidis serogroup C (strain 053442).